Consider the following 628-residue polypeptide: Glutamyl-tRNA(Gln) amidotransferase subunit E (628 aa).

The protein belongs to the GatB/GatE family. GatE subfamily. Heterodimer of GatD and GatE.

It catalyses the reaction L-glutamyl-tRNA(Gln) + L-glutamine + ATP + H2O = L-glutaminyl-tRNA(Gln) + L-glutamate + ADP + phosphate + H(+). Functionally, allows the formation of correctly charged Gln-tRNA(Gln) through the transamidation of misacylated Glu-tRNA(Gln) in organisms which lack glutaminyl-tRNA synthetase. The reaction takes place in the presence of glutamine and ATP through an activated gamma-phospho-Glu-tRNA(Gln). The GatDE system is specific for glutamate and does not act on aspartate. The polypeptide is Glutamyl-tRNA(Gln) amidotransferase subunit E (Thermococcus gammatolerans (strain DSM 15229 / JCM 11827 / EJ3)).